The sequence spans 631 residues: tRNA uridine 5-carboxymethylaminomethyl modification enzyme MnmG (631 aa).

FAD contacts are provided by residues 13–18, Val125, and Ser180; that span reads GGGHAG. 273–287 serves as a coordination point for NAD(+); that stretch reads GPRYCPSIEDKVMRF. An FAD-binding site is contributed by Gln370.

This sequence belongs to the MnmG family. As to quaternary structure, homodimer. Heterotetramer of two MnmE and two MnmG subunits. FAD serves as cofactor.

It is found in the cytoplasm. In terms of biological role, NAD-binding protein involved in the addition of a carboxymethylaminomethyl (cmnm) group at the wobble position (U34) of certain tRNAs, forming tRNA-cmnm(5)s(2)U34. This Vibrio atlanticus (strain LGP32) (Vibrio splendidus (strain Mel32)) protein is tRNA uridine 5-carboxymethylaminomethyl modification enzyme MnmG.